A 192-amino-acid chain; its full sequence is Fe/S biogenesis protein NfuA (192 aa).

[4Fe-4S] cluster contacts are provided by cysteine 149 and cysteine 152.

The protein belongs to the NfuA family. Homodimer. [4Fe-4S] cluster serves as cofactor.

Functionally, involved in iron-sulfur cluster biogenesis. Binds a 4Fe-4S cluster, can transfer this cluster to apoproteins, and thereby intervenes in the maturation of Fe/S proteins. Could also act as a scaffold/chaperone for damaged Fe/S proteins. This Shewanella frigidimarina (strain NCIMB 400) protein is Fe/S biogenesis protein NfuA.